A 125-amino-acid polypeptide reads, in one-letter code: NYHPASETIQALDENILLLKPAFQYSDNVAKEYENKCKNQIALKVEEILQNQGYKVISVDSSDKDDLSFAQKKEGYLTLSLSGEIVLRPDPKRTTQKKSEPGLLFSTGLDKMQGVLISAGFVKVT.

An N-acetyl-neuraminyl-alpha(2,3)-lactose binding motif region spans residues 92–97 (KRTTQK).

It localises to the cell outer membrane. This Helicobacter acinonychis (Helicobacter acinonyx) protein is Neuraminyllactose-binding hemagglutinin (hpaA).